The primary structure comprises 382 residues: uncharacterized protein (382 aa).

12 consecutive transmembrane segments (helical) span residues 14 to 34 (GLLL…LWLA), 45 to 65 (VVSS…GYVI), 79 to 99 (FIFA…SWLA), 102 to 122 (FVAG…LMCS), 131 to 151 (LLAA…LLVS), 157 to 177 (LMSV…PLLF), 204 to 224 (LGVN…GLMP), 235 to 255 (ASIG…QWPI), 270 to 290 (VQVF…AMAP), 291 to 311 (ALFI…AWAC), 325 to 345 (ALLL…AMLM), and 348 to 368 (FSDN…LLML).

This sequence belongs to the major facilitator superfamily. YcaD (TC 2.A.1.26) family.

It localises to the cell inner membrane. This is an uncharacterized protein from Shigella dysenteriae serotype 1 (strain Sd197).